Consider the following 492-residue polypeptide: Virion host shutoff protein (492 aa).

Disordered regions lie at residues 110 to 130 (EEAS…SRPS), 143 to 165 (FAPG…GAPS), 288 to 307 (SQAR…LESM), and 334 to 369 (EDDY…PPEL). Low complexity predominate over residues 144–165 (APGDRGTRAAGPGPAAPSGAPS).

The protein belongs to the herpesviridae VHS protein family. Interacts with human EIF4H, EIF4A1 and EIF4A2; interaction with eIF4AI and EIF4A2 presumably allows Vhs protein to associate with the eIF4F cap-binding complex.

It localises to the virion. Functionally, minor structural protein that acts as an endoribonuclease during lytic infection. Degrades host mRNAs in the cytoplasm by cutting them at preferred sites, including some in regions of translation initiation. Together with inhibition of host splicing by ICP27, contributes to an overall decrease in host protein synthesis. Also, after the onset of viral transcription, accelerates the turnover of viral mRNA, thereby facilitating the sequential expression of different classes of viral genes. Binds translation initiation factors eIF4H, eIF4AI, and eIF4AII, thereby may interact directly with the translation initiation complex and thus digest specifically mRNAs. Also impedes antigen presentation by major histocompatibility complex class I and class II molecules, inhibits secretion of cytokines that would otherwise recruit lymphocytes and neutrophils cells to the site of infection and blocks the activation of dendritic cells. Impedes the alpha/beta interferon-mediated response to infection. Inhibits the integrated stress response (ISR) in the infected cell, this function requires the endonuclease activity. Stress granule formation is thus inhibited, which allows protein synthesis and viral replication. This chain is Virion host shutoff protein (UL41), found in Human herpesvirus 2 (strain G) (HHV-2).